The chain runs to 383 residues: Succinyl-diaminopimelate desuccinylase (383 aa).

H74 is a binding site for Zn(2+). D76 is a catalytic residue. A Zn(2+)-binding site is contributed by D107. The Proton acceptor role is filled by E141. Positions 142, 170, and 356 each coordinate Zn(2+).

It belongs to the peptidase M20A family. DapE subfamily. Homodimer. It depends on Zn(2+) as a cofactor. Requires Co(2+) as cofactor.

It catalyses the reaction N-succinyl-(2S,6S)-2,6-diaminopimelate + H2O = (2S,6S)-2,6-diaminopimelate + succinate. It functions in the pathway amino-acid biosynthesis; L-lysine biosynthesis via DAP pathway; LL-2,6-diaminopimelate from (S)-tetrahydrodipicolinate (succinylase route): step 3/3. Catalyzes the hydrolysis of N-succinyl-L,L-diaminopimelic acid (SDAP), forming succinate and LL-2,6-diaminopimelate (DAP), an intermediate involved in the bacterial biosynthesis of lysine and meso-diaminopimelic acid, an essential component of bacterial cell walls. In Polynucleobacter necessarius subsp. necessarius (strain STIR1), this protein is Succinyl-diaminopimelate desuccinylase.